The primary structure comprises 190 residues: Hypoxanthine/guanine phosphoribosyltransferase (190 aa).

This sequence belongs to the purine/pyrimidine phosphoribosyltransferase family. Archaeal HPRT subfamily. As to quaternary structure, homodimer.

The protein localises to the cytoplasm. It carries out the reaction IMP + diphosphate = hypoxanthine + 5-phospho-alpha-D-ribose 1-diphosphate. The catalysed reaction is GMP + diphosphate = guanine + 5-phospho-alpha-D-ribose 1-diphosphate. It participates in purine metabolism; IMP biosynthesis via salvage pathway; IMP from hypoxanthine: step 1/1. Catalyzes a salvage reaction resulting in the formation of IMP that is energically less costly than de novo synthesis. In Methanobacterium lacus (strain AL-21), this protein is Hypoxanthine/guanine phosphoribosyltransferase.